The chain runs to 121 residues: Small ribosomal subunit protein uS13 (121 aa).

The tract at residues 90-121 (RHRRGLPVRGQHTKNNARTRKGKKVSIAGRKK) is disordered.

It belongs to the universal ribosomal protein uS13 family. Part of the 30S ribosomal subunit. Forms a loose heterodimer with protein S19. Forms two bridges to the 50S subunit in the 70S ribosome.

Functionally, located at the top of the head of the 30S subunit, it contacts several helices of the 16S rRNA. In the 70S ribosome it contacts the 23S rRNA (bridge B1a) and protein L5 of the 50S subunit (bridge B1b), connecting the 2 subunits; these bridges are implicated in subunit movement. Contacts the tRNAs in the A and P-sites. In Lactiplantibacillus plantarum (strain ATCC BAA-793 / NCIMB 8826 / WCFS1) (Lactobacillus plantarum), this protein is Small ribosomal subunit protein uS13.